The sequence spans 203 residues: dITP/XTP pyrophosphatase (203 aa).

Residue 16–21 (SHNRGK) coordinates substrate. Residues E48 and D77 each coordinate Mg(2+). Catalysis depends on D77, which acts as the Proton acceptor. Residues S78, 161-164 (FGYD), K184, and 189-190 (HR) each bind substrate.

It belongs to the HAM1 NTPase family. Homodimer. It depends on Mg(2+) as a cofactor.

It catalyses the reaction XTP + H2O = XMP + diphosphate + H(+). It carries out the reaction dITP + H2O = dIMP + diphosphate + H(+). The enzyme catalyses ITP + H2O = IMP + diphosphate + H(+). Functionally, pyrophosphatase that catalyzes the hydrolysis of nucleoside triphosphates to their monophosphate derivatives, with a high preference for the non-canonical purine nucleotides XTP (xanthosine triphosphate), dITP (deoxyinosine triphosphate) and ITP. Seems to function as a house-cleaning enzyme that removes non-canonical purine nucleotides from the nucleotide pool, thus preventing their incorporation into DNA/RNA and avoiding chromosomal lesions. The chain is dITP/XTP pyrophosphatase from Rhodospirillum centenum (strain ATCC 51521 / SW).